Consider the following 466-residue polypeptide: Coagulation factor VII (466 aa).

The N-terminal stretch at 1–20 is a signal peptide; the sequence is MVSQALRLLCLLLGLQGCLA. Residues 21-60 constitute a propeptide that is removed on maturation; sequence AGGVAEASGGETRDMPWKPGPHRVFITQEEAHGVLHRRRR. The 45-residue stretch at 61-105 folds into the Gla domain; the sequence is ANAFLEELRPGSLERECKEEQCSFEEAREIFKDLERTKLFWISYS. 4-carboxyglutamate occurs at positions 66, 67, 74, 76, 79, 80, 85, 86, 89, and 95. Cys-77 and Cys-82 are disulfide-bonded. One can recognise an EGF-like 1; calcium-binding domain in the interval 106–142; it reads DGDQCASSPCQNGGSCKDQLQSYICFCLPAFEGRNCE. Disulfide bonds link Cys-110–Cys-121, Cys-115–Cys-130, Cys-132–Cys-141, Cys-151–Cys-162, Cys-158–Cys-172, Cys-174–Cys-187, Cys-195–Cys-322, Cys-219–Cys-224, Cys-238–Cys-254, and Cys-370–Cys-389. O-linked (Glc...) serine; alternate glycosylation occurs at Ser-112. A glycan (O-linked (Xyl...) serine; alternate) is linked at Ser-112. An O-linked (Fuc) serine glycan is attached at Ser-120. Position 123 is a (3R)-3-hydroxyaspartate (Asp-123). The 42-residue stretch at 147–188 folds into the EGF-like 2 domain; it reads DQLICVNENGGCEQYCSDHTGTKRSCRCHEGYSLLADGVSCT. Residue Asn-205 is glycosylated (N-linked (GlcNAc...) asparagine). In terms of domain architecture, Peptidase S1 spans 213–452; sequence IVGGKVCPKG…YIEWLQKLMR (240 aa). Catalysis depends on charge relay system residues His-253 and Asp-302. The N-linked (GlcNAc...) asparagine glycan is linked to Asn-382. A substrate-binding site is contributed by Asp-398. A disulfide bridge connects residues Cys-400 and Cys-428. Ser-404 acts as the Charge relay system in catalysis.

This sequence belongs to the peptidase S1 family. Heterodimer of a light chain and a heavy chain linked by a disulfide bond. In terms of processing, the vitamin K-dependent, enzymatic carboxylation of some glutamate residues allows the modified protein to bind calcium. The iron and 2-oxoglutarate dependent 3-hydroxylation of aspartate and asparagine is (R) stereospecific within EGF domains. Post-translationally, O-glycosylated. O-fucosylated by POFUT1 on a conserved serine or threonine residue found in the consensus sequence C2-X(4,5)-[S/T]-C3 of EGF domains, where C2 and C3 are the second and third conserved cysteines. In terms of processing, can be either O-glucosylated or O-xylosylated at Ser-112 by POGLUT1.

The protein localises to the secreted. It catalyses the reaction Selective cleavage of Arg-|-Ile bond in factor X to form factor Xa.. Initiates the extrinsic pathway of blood coagulation. Serine protease that circulates in the blood in a zymogen form. Factor VII is converted to factor VIIa by factor Xa, factor XIIa, factor IXa, or thrombin by minor proteolysis. In the presence of tissue factor and calcium ions, factor VIIa then converts factor X to factor Xa by limited proteolysis. Factor VIIa also converts factor IX to factor IXa in the presence of tissue factor and calcium. This Pan paniscus (Pygmy chimpanzee) protein is Coagulation factor VII (F7).